Here is a 421-residue protein sequence, read N- to C-terminus: D-inositol 3-phosphate glycosyltransferase (421 aa).

Residue His13 coordinates 1D-myo-inositol 3-phosphate. Residues 19–20 and Gly27 each bind UDP-N-acetyl-alpha-D-glucosamine; that span reads QP. 1D-myo-inositol 3-phosphate is bound by residues 24-29, Lys82, Tyr115, Thr139, and Arg159; that span reads DAGGMN. Residues Arg233, Lys238, and Val294 each contribute to the UDP-N-acetyl-alpha-D-glucosamine site. The Mg(2+) site is built by Phe303, Arg304, and Ala306. Residues Glu316 and Glu324 each coordinate UDP-N-acetyl-alpha-D-glucosamine. Thr330 is a Mg(2+) binding site.

The protein belongs to the glycosyltransferase group 1 family. MshA subfamily. In terms of assembly, homodimer.

The enzyme catalyses 1D-myo-inositol 3-phosphate + UDP-N-acetyl-alpha-D-glucosamine = 1D-myo-inositol 2-acetamido-2-deoxy-alpha-D-glucopyranoside 3-phosphate + UDP + H(+). In terms of biological role, catalyzes the transfer of a N-acetyl-glucosamine moiety to 1D-myo-inositol 3-phosphate to produce 1D-myo-inositol 2-acetamido-2-deoxy-glucopyranoside 3-phosphate in the mycothiol biosynthesis pathway. This is D-inositol 3-phosphate glycosyltransferase from Arthrobacter sp. (strain FB24).